Here is a 247-residue protein sequence, read N- to C-terminus: NH(3)-dependent NAD(+) synthetase (247 aa).

Residue 29–36 coordinates ATP; that stretch reads GLSGGVDS. Mg(2+) is bound at residue Asp-35. Arg-112 is a deamido-NAD(+) binding site. Thr-132 is an ATP binding site. Residue Glu-137 participates in Mg(2+) binding. Positions 145 and 152 each coordinate deamido-NAD(+). Lys-161 and Ser-183 together coordinate ATP. Deamido-NAD(+) is bound at residue 233–234; the sequence is HK.

The protein belongs to the NAD synthetase family. In terms of assembly, homodimer.

The catalysed reaction is deamido-NAD(+) + NH4(+) + ATP = AMP + diphosphate + NAD(+) + H(+). The protein operates within cofactor biosynthesis; NAD(+) biosynthesis; NAD(+) from deamido-NAD(+) (ammonia route): step 1/1. Its function is as follows. Catalyzes the ATP-dependent amidation of deamido-NAD to form NAD. Uses ammonia as a nitrogen source. The sequence is that of NH(3)-dependent NAD(+) synthetase from Archaeoglobus fulgidus (strain ATCC 49558 / DSM 4304 / JCM 9628 / NBRC 100126 / VC-16).